A 491-amino-acid polypeptide reads, in one-letter code: Probable glycine dehydrogenase (decarboxylating) subunit 2 (491 aa).

N6-(pyridoxal phosphate)lysine is present on Lys-264.

Belongs to the GcvP family. C-terminal subunit subfamily. In terms of assembly, the glycine cleavage system is composed of four proteins: P, T, L and H. In this organism, the P 'protein' is a heterodimer of two subunits. The cofactor is pyridoxal 5'-phosphate.

The catalysed reaction is N(6)-[(R)-lipoyl]-L-lysyl-[glycine-cleavage complex H protein] + glycine + H(+) = N(6)-[(R)-S(8)-aminomethyldihydrolipoyl]-L-lysyl-[glycine-cleavage complex H protein] + CO2. The glycine cleavage system catalyzes the degradation of glycine. The P protein binds the alpha-amino group of glycine through its pyridoxal phosphate cofactor; CO(2) is released and the remaining methylamine moiety is then transferred to the lipoamide cofactor of the H protein. This Coxiella burnetii (strain Dugway 5J108-111) protein is Probable glycine dehydrogenase (decarboxylating) subunit 2.